A 528-amino-acid chain; its full sequence is RNA polymerase sigma factor SigA (528 aa).

The segment covering 1 to 10 (MAATKASTAT) has biased composition (polar residues). Positions 1–211 (MAATKASTAT…FVWDEDESEA (211 aa)) are disordered. 3 stretches are compositionally biased toward low complexity: residues 19-31 (TKSP…GAKT), 38-56 (AKSA…PAAR), and 80-92 (AAKS…PSAR). The segment covering 100–109 (APKDAQHEAA) has biased composition (basic and acidic residues). The span at 110–173 (TDPEDALDSV…DDEDHEDLEA (64 aa)) shows a compositional bias: acidic residues. A sigma-70 factor domain-2 region spans residues 295–365 (LLEANLRLVV…TRAMADQART (71 aa)). The Interaction with polymerase core subunit RpoC signature appears at 319-322 (DLIQ). The segment at 374–450 (EVINKLGRIQ…DSEAVVAVDA (77 aa)) is sigma-70 factor domain-3. Residues 463–516 (VLDTLSEREAGVVRLRFGLTDGQPRTLDEIGQVYGVTRERIRQIESKTMSKLRH) are sigma-70 factor domain-4. Positions 489 to 508 (LDEIGQVYGVTRERIRQIES) form a DNA-binding region, H-T-H motif.

This sequence belongs to the sigma-70 factor family. RpoD/SigA subfamily. As to quaternary structure, interacts transiently with the RNA polymerase catalytic core.

The protein resides in the cytoplasm. Functionally, sigma factors are initiation factors that promote the attachment of RNA polymerase to specific initiation sites and are then released. This sigma factor is the primary sigma factor during exponential growth. This chain is RNA polymerase sigma factor SigA, found in Mycobacterium bovis (strain ATCC BAA-935 / AF2122/97).